The primary structure comprises 443 residues: Phosphoribosylamine--glycine ligase (443 aa).

Positions arginine 109–asparagine 324 constitute an ATP-grasp domain. Methionine 140–threonine 202 is an ATP binding site. Mg(2+) contacts are provided by glutamine 282, glutamate 294, and asparagine 296. Residues glutamine 282, glutamate 294, and asparagine 296 each coordinate Mn(2+).

The protein belongs to the GARS family. The cofactor is Mg(2+). It depends on Mn(2+) as a cofactor.

The enzyme catalyses 5-phospho-beta-D-ribosylamine + glycine + ATP = N(1)-(5-phospho-beta-D-ribosyl)glycinamide + ADP + phosphate + H(+). It functions in the pathway purine metabolism; IMP biosynthesis via de novo pathway; N(1)-(5-phospho-D-ribosyl)glycinamide from 5-phospho-alpha-D-ribose 1-diphosphate: step 2/2. The protein is Phosphoribosylamine--glycine ligase of Methanococcus vannielii (strain ATCC 35089 / DSM 1224 / JCM 13029 / OCM 148 / SB).